Consider the following 299-residue polypeptide: FFTIWLDINMFLPLGVDCWIDNTRVVYNRSSGRMSNAPGVQIRVPGFGKTYSVEYLDDNKLAGYLHTLVQNLVNNAYVRDETVRAAPYDWRLAPSQQDEYYQKLAELVEEMYDAYGKPVFLIGHRLGCLHVLHFLLHQSWKGIPIMSNIKLKEEQRITTTSPWMFPAHHVWPEDHVFISTPNFNYTGQDFKRFFADLHFEEGWYMFLQSRDLLEGLPAPGVEVYCLYGVGRPTRYTYIYDHNFPYKDPVAILYEDGDETVATRSTELCGQWQGRQSQPVYLLPMNGTDHLNMVFSNKTL.

Residues asparagine 28 and asparagine 184 are each glycosylated (N-linked (GlcNAc...) asparagine). A disulfide bond links cysteine 225 and cysteine 268. The Charge relay system role is filled by aspartate 257. Residue asparagine 285 is glycosylated (N-linked (GlcNAc...) asparagine). Histidine 289 (charge relay system) is an active-site residue. Residue asparagine 296 is glycosylated (N-linked (GlcNAc...) asparagine).

This sequence belongs to the AB hydrolase superfamily. Lipase family.

It localises to the secreted. It carries out the reaction a sterol + a 1,2-diacyl-sn-glycero-3-phosphocholine = a sterol ester + a 1-acyl-sn-glycero-3-phosphocholine. Its activity is regulated as follows. APOA1 is the most potent activator in plasma. Also activated by APOE, APOC1 and APOA4. Functionally, central enzyme in the extracellular metabolism of plasma lipoproteins. Synthesized mainly in the liver and secreted into plasma where it converts cholesterol and phosphatidylcholines (lecithins) to cholesteryl esters and lysophosphatidylcholines on the surface of high and low density lipoproteins (HDLs and LDLs). The cholesterol ester is then transported back to the liver. Has a preference for plasma 16:0-18:2 or 18:O-18:2 phosphatidylcholines. Also produced in the brain by primary astrocytes, and esterifies free cholesterol on nascent APOE-containing lipoproteins secreted from glia and influences cerebral spinal fluid (CSF) APOE- and APOA1 levels. Together with APOE and the cholesterol transporter ABCA1, plays a key role in the maturation of glial-derived, nascent lipoproteins. Required for remodeling high-density lipoprotein particles into their spherical forms. The sequence is that of Phosphatidylcholine-sterol acyltransferase (LCAT) from Micromys minutus (European harvest mouse).